The sequence spans 352 residues: Fe(3+) ions import ATP-binding protein FbpC 1 (352 aa).

The ABC transporter domain maps to 11–241; that stretch reads VELKHITKRF…PASRFMASFM (231 aa). 43–50 is an ATP binding site; sequence GPSGCGKT.

It belongs to the ABC transporter superfamily. Fe(3+) ion importer (TC 3.A.1.10) family. In terms of assembly, the complex is composed of two ATP-binding proteins (FbpC), two transmembrane proteins (FbpB) and a solute-binding protein (FbpA).

The protein resides in the cell inner membrane. The enzyme catalyses Fe(3+)(out) + ATP + H2O = Fe(3+)(in) + ADP + phosphate + H(+). Its function is as follows. Part of the ABC transporter complex FbpABC involved in Fe(3+) ions import. Responsible for energy coupling to the transport system. The chain is Fe(3+) ions import ATP-binding protein FbpC 1 from Pectobacterium atrosepticum (strain SCRI 1043 / ATCC BAA-672) (Erwinia carotovora subsp. atroseptica).